We begin with the raw amino-acid sequence, 60 residues long: Homeobox protein EgHBX4 (60 aa).

The segment at residues 1-60 is a DNA-binding region (homeobox); sequence SRRERTIYTPEQLEAMEEVFGVNRYPDVSMREELASRLGINESKIQVWFKNRRAKLRNLE.

Belongs to the paired homeobox family. Bicoid subfamily.

Its subcellular location is the nucleus. The polypeptide is Homeobox protein EgHBX4 (HBX4) (Echinococcus granulosus (Hydatid tapeworm)).